The primary structure comprises 243 residues: Killer cell lectin-like receptor subfamily I member 1 (243 aa).

At 1 to 80 the chain is on the cytoplasmic side; it reads MPHSKHRDYT…RQGPKSAVWR (80 aa). 2 consecutive short sequence motifs (ITIM motif) follow at residues 16–21 and 47–52; these read IPYTEL and LKYAEL. The chain crosses the membrane as a helical; Signal-anchor for type II membrane protein span at residues 81–101; that stretch reads VVTCVLGVLCVVLMITMGILV. At 102 to 243 the chain is on the extracellular side; sequence PKLFSGQEEQ…KPYACEFNKM (142 aa). Residues asparagine 123, asparagine 191, asparagine 194, asparagine 200, and asparagine 214 are each glycosylated (N-linked (GlcNAc...) asparagine). Residues 137–239 enclose the C-type lectin domain; it reads FGNNFYLFFR…CSSKKPYACE (103 aa). 2 disulfides stabilise this stretch: cysteine 158/cysteine 238 and cysteine 217/cysteine 230.

Heterodimer with KLRE1. Interacts with PTPN6. As to expression, expressed in natural killer (NK) cells.

Its subcellular location is the cell membrane. Lectin-like receptor for natural killer (NK) cells. Heterodimer formation with KLRE1 mediates inhibition of NK cell cytolytic activity. The chain is Killer cell lectin-like receptor subfamily I member 1 from Rattus norvegicus (Rat).